The following is a 319-amino-acid chain: Shiga-like toxin 2 subunit A (319 aa).

The N-terminal stretch at 1–22 is a signal peptide; it reads MKCILFKWVLCLLLGFSSVSYS. The interval 23-272 is A1; the sequence is REFTIDFSTQ…CHHQGARSVR (250 aa). Residue Glu189 is part of the active site. Cys263 and Cys282 are oxidised to a cystine. The segment at 273–314 is A2; the sequence is AVNEESQPECQITGDRPVIKINNTLWESNTAAAFLNRKSQFL.

Belongs to the ribosome-inactivating protein family. In terms of assembly, shiga-like toxin contains a single A subunit and multiple copies of a B subunit.

Its subcellular location is the secreted. The enzyme catalyses Endohydrolysis of the N-glycosidic bond at one specific adenosine on the 28S rRNA.. The A subunit is responsible for inhibiting protein synthesis through the catalytic inactivation of 60S ribosomal subunits. After endocytosis, the A subunit is cleaved by furin in two fragments, A1 and A2: A1 is the catalytically active fragment, and A2 is essential for holotoxin assembly with the B subunits. The chain is Shiga-like toxin 2 subunit A (stxA2) from Escherichia coli O157:H7 (Bacteriophage 933W).